Reading from the N-terminus, the 296-residue chain is Probable DNA-directed RNA polymerase III subunit RPC6 (296 aa).

It belongs to the eukaryotic RPC34/RPC39 RNA polymerase subunit family.

It localises to the nucleus. Its function is as follows. DNA-dependent RNA polymerase catalyzes the transcription of DNA into RNA using the four ribonucleoside triphosphates as substrates. Specific peripheric component of RNA polymerase III which synthesizes small RNAs, such as 5S rRNA and tRNAs. The polypeptide is Probable DNA-directed RNA polymerase III subunit RPC6 (Caenorhabditis elegans).